The sequence spans 113 residues: Protein FAM27E3 (113 aa).

The interval 1–113 (MGIFQLLRDR…YTHRHTHRVL (113 aa)) is disordered. A compositionally biased stretch (basic and acidic residues) spans 77-99 (QTDRERERNTQRLRDRERRENGR). The span at 100–113 (HTHTYTHRHTHRVL) shows a compositional bias: basic residues.

This sequence belongs to the FAM27 family.

In Homo sapiens (Human), this protein is Protein FAM27E3 (FAM27E3).